The following is a 104-amino-acid chain: Synaptic plasticity regulator PANTS (104 aa).

Residues 58–104 (RRSAEAQADSLPPGPEGEPRVAGAGPNAVTGILTRNQGTERPHGDTR) form a disordered region. Residues 95-104 (GTERPHGDTR) are compositionally biased toward basic and acidic residues.

This sequence belongs to the UPF0545 family. As to quaternary structure, interacts with RTN4 isoform A/Nogo-A; the interaction results in enhanced RTN4-mediated inhibition of AMPA receptor clustering. Also interacts with NCAM1, RANBP2 and CCT8. Rapidly degraded by proteolysis following neuronal stimulation, resulting in increased AMPA receptor clustering.

The protein resides in the synapse. The protein localises to the synaptic cleft. Its function is as follows. Negatively regulates long-term potentiation and modulates adult synaptic plasticity. Stabilizes the interaction of RTN4 isoform A/Nogo-A with its receptors, inhibiting clustering of postsynaptic AMPA receptors at synaptic sites. Upon neuronal stimulation, degraded at synapses, reducing RTN4 signaling and allowing AMPA receptor clustering at individual synapses. This Bos taurus (Bovine) protein is Synaptic plasticity regulator PANTS.